The sequence spans 317 residues: NADH-ubiquinone oxidoreductase chain 1 (317 aa).

9 helical membrane passes run 3–23 (YIEL…LTVA), 37–57 (PNAV…KLLL), 69–89 (LILF…WSVI), 103–123 (GFIL…LAGW), 141–161 (LISY…IGGT), 173–193 (AIWY…GCVA), 207–227 (SELV…LFFL), 247–267 (GGTG…YIWV), and 282–302 (LCWM…PAYL).

The protein belongs to the complex I subunit 1 family.

The protein localises to the mitochondrion inner membrane. The catalysed reaction is a ubiquinone + NADH + 5 H(+)(in) = a ubiquinol + NAD(+) + 4 H(+)(out). Functionally, core subunit of the mitochondrial membrane respiratory chain NADH dehydrogenase (Complex I) that is believed to belong to the minimal assembly required for catalysis. Complex I functions in the transfer of electrons from NADH to the respiratory chain. The immediate electron acceptor for the enzyme is believed to be ubiquinone. The sequence is that of NADH-ubiquinone oxidoreductase chain 1 (NAD1) from Candida albicans (strain SC5314 / ATCC MYA-2876) (Yeast).